The primary structure comprises 382 residues: Galactokinase (382 aa).

34–37 (EHTD) contacts substrate. 124 to 130 (GAGLSSS) lines the ATP pocket. Mg(2+) is bound by residues S130 and E162. The active-site Proton acceptor is D174. Y223 provides a ligand contact to substrate.

It belongs to the GHMP kinase family. GalK subfamily.

It is found in the cytoplasm. The catalysed reaction is alpha-D-galactose + ATP = alpha-D-galactose 1-phosphate + ADP + H(+). The protein operates within carbohydrate metabolism; galactose metabolism. Functionally, catalyzes the transfer of the gamma-phosphate of ATP to D-galactose to form alpha-D-galactose-1-phosphate (Gal-1-P). The chain is Galactokinase from Salmonella gallinarum (strain 287/91 / NCTC 13346).